A 547-amino-acid chain; its full sequence is MTAKDILFDSDARAKLKVGVDKLANAVKVTLGPAGRNVLIDKKFGAPTSTKDGVTVAKEIELSDPFENMGAQMVREVASKTSDVAGDGTTTATVLAQAIYREGLKNVAAGARPIDLKRGIDRAVKEVVQELRNISRSISGKKEIAQVGTISANNDPVIGDLIADAMDKVGKDGVITVEEAKGMDTELKVVEGMQFDRGYLSPYFVTNSETMDAELEDPLILIYDKKISNMKELLPILEKSAQSGRPLLIISEDIEGEALATIVVNKLRGTLRVCAVKAPGFGDRRKAMLEDIAILTGGTVISEEKGYKLENATISYLGQAGRVTVDKDNTTIVEGKGGAEEIKARINEIKGQVEKSTSDYDTEKLQERLAKLSGGVAVLNIGASTEVEMKEKKARVEDALHATRAAVQEGIVVGGGVALIRAIKGLDRAIADNEDQKTGIEIIRRALEEPLRQIVANTGTTDGAVVLERVKAGTGDFGFNARTEQYENLVEAGVVDPTKVTRSALENAASVASILLTTEAAITDVKEEKSDMPAMPPGGMGGMGGMY.

ATP-binding positions include 30-33, K51, 87-91, G415, and D496; these read TLGP and DGTTT.

The protein belongs to the chaperonin (HSP60) family. In terms of assembly, forms a cylinder of 14 subunits composed of two heptameric rings stacked back-to-back. Interacts with the co-chaperonin GroES.

The protein resides in the cytoplasm. The enzyme catalyses ATP + H2O + a folded polypeptide = ADP + phosphate + an unfolded polypeptide.. Its function is as follows. Together with its co-chaperonin GroES, plays an essential role in assisting protein folding. The GroEL-GroES system forms a nano-cage that allows encapsulation of the non-native substrate proteins and provides a physical environment optimized to promote and accelerate protein folding. In Pelodictyon phaeoclathratiforme (strain DSM 5477 / BU-1), this protein is Chaperonin GroEL.